Consider the following 117-residue polypeptide: G antigen 13 (117 aa).

Positions 1-117 are disordered; that stretch reads MSWRGRSTYY…PEEGEKQSQC (117 aa). Composition is skewed to acidic residues over residues 32 to 45 and 87 to 96; these read FSDEVEPATPEEGE and ECEDGPDGQE. The span at 103–117 shows a compositional bias: basic and acidic residues; the sequence is EEVKTPEEGEKQSQC.

It belongs to the GAGE family.

The sequence is that of G antigen 13 from Homo sapiens (Human).